A 162-amino-acid polypeptide reads, in one-letter code: ATP synthase subunit b (162 aa).

A helical membrane pass occupies residues 6–25 (TLFTLVTFLVLMLAVGKVAW).

It belongs to the ATPase B chain family. F-type ATPases have 2 components, F(1) - the catalytic core - and F(0) - the membrane proton channel. F(1) has five subunits: alpha(3), beta(3), gamma(1), delta(1), epsilon(1). F(0) has three main subunits: a(1), b(2) and c(10-14). The alpha and beta chains form an alternating ring which encloses part of the gamma chain. F(1) is attached to F(0) by a central stalk formed by the gamma and epsilon chains, while a peripheral stalk is formed by the delta and b chains.

It localises to the cell membrane. In terms of biological role, f(1)F(0) ATP synthase produces ATP from ADP in the presence of a proton or sodium gradient. F-type ATPases consist of two structural domains, F(1) containing the extramembraneous catalytic core and F(0) containing the membrane proton channel, linked together by a central stalk and a peripheral stalk. During catalysis, ATP synthesis in the catalytic domain of F(1) is coupled via a rotary mechanism of the central stalk subunits to proton translocation. Component of the F(0) channel, it forms part of the peripheral stalk, linking F(1) to F(0). This is ATP synthase subunit b from Lacticaseibacillus casei (strain BL23) (Lactobacillus casei).